Consider the following 820-residue polypeptide: Leucine--tRNA ligase (820 aa).

The 'HIGH' region motif lies at 40–51; sequence PYPSGAGLHVGH. A 'KMSKS' region motif is present at residues 601–605; sequence KMSKS. Position 604 (Lys604) interacts with ATP.

Belongs to the class-I aminoacyl-tRNA synthetase family.

The protein localises to the cytoplasm. The enzyme catalyses tRNA(Leu) + L-leucine + ATP = L-leucyl-tRNA(Leu) + AMP + diphosphate. The protein is Leucine--tRNA ligase of Chlamydia pneumoniae (Chlamydophila pneumoniae).